The following is a 2193-amino-acid chain: MARARPSVAGGGVAAPPERAGPGRPRRSRTGHHCDPECPGLRAAPRTPGPGAGRRAAKLRPGRGWWALLLLQLHLLRALAQDDVAPYFKTEPGLPQIHLEGNRLVLTCLAEGSWPLEFKWIRNDSELTTYSSEYKYIIPSLQKLDAGFYRCVVRNRMGALLQRKSEIQVAYMGNFMDTDQRKTVSQGHAALLNLLPIVSCPQPQVTWFREGHKIIPSSRIAITLENQLVILATTASDAGAYYVQAVNEKNGENKTSPFIHLSVARDTGTHEAMAPIIVVAPGNRSVVAGSSETTLECIANARPVEELSVHWKRNGVRLTSGLHSYGRRLTITNPTSADTGMYVCEATLRGSTFEPARARAFLSIIEPPYFTAEPESRILGEVEETMDIPCRAMGVPLPTLQWYKDAVPLSKLQNPRYKVLPSGGLHIQKLSPEDSGIFQCFASNEGGEVQTHTYLDVTNIAPAFTQRPVDTTVTDGMTAVLRCEVSGAPKPAITWKRGNHILASGSVRIPRFMLLESGGLRIAPVFIQDAGNYTCYAANTEASVNASAMLTVWNRTSIVHPPEDRVVIKGTTATLCCGATHDPRTSLRYVWKKDNVVITASSSSRIVVEKDGSLVISQTWSGDIGDYTCEIISEGGSDSRTARLEVIELPHPPQNLLASLSPARSHSVTLSWVRPFDGNSPVLYYIVQVSENNSPWKVHLSNVGPEMTGVTVSGLTPARTYQFRVCAVNQVGKGQYSTETSRLMLPEEPPSAPPKNIVASGRTNQSIMVQWQPPPETEHNGVLRGYILRYRLAGLPGEHQQRNISSPEVNYCLVTDLIIWTQYEIQVAAYNGAGLGVFSRAVTEYTLQGVPTAPPQNVQAEAVNSTTVHFLWNPPPQQFINGINQGYKLLAWPADAPETVTVVTIAPDFHGIHHGYITNLKKFTAYFTSVLCFTTPGDGPPSSPQLVWTHEDKPGAVGHLSFTEILDTSLKVSWQEPLERNGIIMGYQISWEVYGRNDSRLTHTLNSTMHEYKIQGLSSLTTYTIDVAALTAAGVGVTTSSTISSGVPPDLPGAPSNLVISNISPRSATLQFRPGYDGKTAICRWIVEGQVGAIGDEEEWVTLYEEENEPDAQMLEIPNLTPYTHYRFRMRQVNIVGPSPFSQSSRVIQTLQAPPDVAPTSLTVRTASETSLRLRWVPLPDSQYNGNPESVGYRVKYWRSDQPSSALAQVVSDRLERELTIEELEEWTEYELRMQAFNAIGAGPWSELVRGRTRESVPSAAPENVSAEAVSSTQILLTWASVPEQDQNGLILGYKVLYCAKDLDPEPRSHVVRGNHTQSALLAGLRKFVVYELQVLAFTRIGNGVPSSPLILERTKDDTPGPPVRLVFPEVRLTAVRIVWQPPEEPNGVILGYQIAYRLASGSPHTFTTVEVGATVRQFTATELAPESAYIFRLSAKTRQGWGEPLEATVITTEKRERPAPPRELLVPQAEVTARSLRLQWVPGSDGASPIRYFTVQVRELPGGEWQTYSSSISHEATACAVERLRPFTSYKLRLKATNDIGDSDFSAETEAVTTLQDVPGEPPGSVSATPHTTSSVLIQWQPPRDESLNGLLQGYRIYYRELESETGMSPEPKTLKSPSALRAELTAQSSFKTVNSSSSLTTYELTHLKKYRRYEVIMTAYNIIGESPASVPVEVFVGEAAPAMAPQNVQVTPLTASQLEVTWDPPPPESQNGNIQGYKVYYWEADSRNETEKMKVLFLPEPVVKIKDLTSHTKYLISISAFNAAGDGPKSDPCQGRTHQAAPGPPSFLAFSEITSTTLNVSWGEPSAANGILQGYRVVYEPLAPVQGVSKVVTVDVKGNWQRWLKVRDLTKGVTYFFRVQARTIAYGPELQANVTAGPAEGSPGSPRNVLVTKSASELTLQWTEGNAGTTPTTGYVIEARPSDEGLWDMFAKDIPRSATSYTVDLDKLRQGVTYEFRVVAVNKAGFGEPSRPSIAVSAQAEAPFYEEWWFLLVMALSSLLLILLVVFVLVLHGQSKKYKSCSTGKGISNMEETVTLDNGGFAALELNSRHLNVKSTFSKKNGTRSPPRPSPGGLHYSDEDICNKYNGAVLTESVNLKEKSVDGSESEASDSDYEEALPKHSFVNHYMSDPTYYNSWKRRPPAAAPHRYEAVAGAEAGPHLHTVITTQSAGGVYTPAGPGARAPLTGFSSFV.

Positions 1–23 are enriched in low complexity; sequence MARARPSVAGGGVAAPPERAGPG. Positions 1-56 are disordered; that stretch reads MARARPSVAGGGVAAPPERAGPGRPRRSRTGHHCDPECPGLRAAPRTPGPGAGRRA. Ig-like C2-type domains lie at 86 to 168, 173 to 259, 275 to 363, 368 to 458, and 462 to 551; these read PYFK…SEIQ, GNFM…SPFI, PIIV…AFLS, PYFT…LDVT, and PAFT…AMLT. Cys-108 and Cys-151 are oxidised to a cystine. 3 N-linked (GlcNAc...) asparagine glycosylation sites follow: Asn-123, Asn-253, and Asn-283. 3 cysteine pairs are disulfide-bonded: Cys-297–Cys-344, Cys-390–Cys-440, and Cys-483–Cys-535. N-linked (GlcNAc...) asparagine glycosylation is found at Asn-532, Asn-545, and Asn-554. The Ig-like C2-type 6 domain occupies 556 to 645; it reads TSIVHPPEDR…GSDSRTARLE (90 aa). Cysteines 577 and 629 form a disulfide. Fibronectin type-III domains lie at 652-748, 753-849, 854-952, 956-1050, 1054-1153, 1158-1256, 1261-1358, 1362-1456, 1461-1558, 1563-1681, 1686-1782, 1786-1881, and 1884-1982; these read PPQN…LPEE, PPKN…TLQG, PPQN…THED, AVGH…VPPD, APSN…TLQA, APTS…TRES, APEN…TKDD, PPVR…TEKR, PPRE…TLQD, PPGS…VGEA, APQN…THQA, PPSF…AGPA, and SPGS…SAQA. N-linked (GlcNAc...) asparagine glycosylation is found at Asn-764, Asn-803, Asn-864, Asn-997, and Asn-1006. N-linked (GlcNAc...) asparagine glycosylation is found at Asn-1264 and Asn-1315. 4 N-linked (GlcNAc...) asparagine glycosylation sites follow: Asn-1636, Asn-1730, Asn-1801, and Asn-1875. A helical transmembrane segment spans residues 1992–2012; sequence FLLVMALSSLLLILLVVFVLV. The Cytoplasmic segment spans residues 2013–2193; it reads LHGQSKKYKS…APLTGFSSFV (181 aa). The segment at 2057–2080 is disordered; the sequence is STFSKKNGTRSPPRPSPGGLHYSD. Residues 2187 to 2193 carry the PDZ-binding motif; sequence TGFSSFV.

It belongs to the sidekick family. Homodimer; mediates homophilic interactions to promote cell adhesion. Interacts (via PDZ-binding motif) with MAGI1, MAGI2, DLG2, DLG3 and DLG4. In terms of assembly, does not mediate homophilic interactions. Expressed by non-overlapping subsets of retinal neurons. Sdk1 and Sdk2 are expressed in non-overlapping subsets of interneurons and retinal ganglion cells (RGCs) that form synapses in distinct inner plexiform layer (IPL) sublaminae (at protein level).

It is found in the cell membrane. The protein localises to the synapse. In terms of biological role, adhesion molecule that promotes lamina-specific synaptic connections in the retina. Expressed in specific subsets of interneurons and retinal ganglion cells (RGCs) and promotes synaptic connectivity via homophilic interactions. The protein is Protein sidekick-1 of Mus musculus (Mouse).